A 226-amino-acid polypeptide reads, in one-letter code: MLTWLKRDDLSFPPLETALREPNGLLAAGGDLRPERLLAAYRHGCFPWYQEGQPLLWWSPDPRTVLFPDELHVSRSLRKRMRHGDYRVTFDKAFAEVIQGCAGPRSYADGTWITTPMQDAYVRLHEMGVAHSVEVWQQGQLVGGLYGLAMGELFFGESMFSRATDASKVGFVTLVERLREWGFALIDCQMPTRHLESFGARSIPRAAFAEALAMHLDRPSAADWRA.

This sequence belongs to the L/F-transferase family.

The protein resides in the cytoplasm. It carries out the reaction N-terminal L-lysyl-[protein] + L-leucyl-tRNA(Leu) = N-terminal L-leucyl-L-lysyl-[protein] + tRNA(Leu) + H(+). The enzyme catalyses N-terminal L-arginyl-[protein] + L-leucyl-tRNA(Leu) = N-terminal L-leucyl-L-arginyl-[protein] + tRNA(Leu) + H(+). The catalysed reaction is L-phenylalanyl-tRNA(Phe) + an N-terminal L-alpha-aminoacyl-[protein] = an N-terminal L-phenylalanyl-L-alpha-aminoacyl-[protein] + tRNA(Phe). Functions in the N-end rule pathway of protein degradation where it conjugates Leu, Phe and, less efficiently, Met from aminoacyl-tRNAs to the N-termini of proteins containing an N-terminal arginine or lysine. This is Leucyl/phenylalanyl-tRNA--protein transferase from Stutzerimonas stutzeri (strain A1501) (Pseudomonas stutzeri).